We begin with the raw amino-acid sequence, 208 residues long: Thymidylate kinase (208 aa).

G10–S17 serves as a coordination point for ATP.

The protein belongs to the thymidylate kinase family.

It carries out the reaction dTMP + ATP = dTDP + ADP. Functionally, phosphorylation of dTMP to form dTDP in both de novo and salvage pathways of dTTP synthesis. This chain is Thymidylate kinase, found in Jannaschia sp. (strain CCS1).